A 271-amino-acid polypeptide reads, in one-letter code: Phosphatidylglycerol--prolipoprotein diacylglyceryl transferase (271 aa).

The next 7 membrane-spanning stretches (helical) occupy residues 25 to 45 (WYGI…KFFV), 60 to 80 (YFIW…ILIY), 103 to 123 (FVGI…IATL), 134 to 154 (WIFL…GRIG), 181 to 201 (PSQL…VYLA), 209 to 229 (GELI…CEFY), and 235 to 255 (GIGF…IMFI). R152 is an a 1,2-diacyl-sn-glycero-3-phospho-(1'-sn-glycerol) binding site.

Belongs to the Lgt family.

It localises to the cell inner membrane. The catalysed reaction is L-cysteinyl-[prolipoprotein] + a 1,2-diacyl-sn-glycero-3-phospho-(1'-sn-glycerol) = an S-1,2-diacyl-sn-glyceryl-L-cysteinyl-[prolipoprotein] + sn-glycerol 1-phosphate + H(+). Its pathway is protein modification; lipoprotein biosynthesis (diacylglyceryl transfer). In terms of biological role, catalyzes the transfer of the diacylglyceryl group from phosphatidylglycerol to the sulfhydryl group of the N-terminal cysteine of a prolipoprotein, the first step in the formation of mature lipoproteins. The protein is Phosphatidylglycerol--prolipoprotein diacylglyceryl transferase of Campylobacter jejuni subsp. jejuni serotype O:6 (strain 81116 / NCTC 11828).